Reading from the N-terminus, the 496-residue chain is uncharacterized protein (496 aa).

The N-terminal stretch at 1-19 (MTTGYILIAAILILGGVIA) is a signal peptide. A helical membrane pass occupies residues 45–67 (AVLVTILTGGLVSATTLAILFIA). A disordered region spans residues 113-137 (LETTRTDKKQVETQRDQAKKEKLKA).

The protein resides in the membrane. This is an uncharacterized protein from Nostoc sp. (strain PCC 7120 / SAG 25.82 / UTEX 2576).